The following is a 487-amino-acid chain: Glutamate--tRNA ligase (487 aa).

The short motif at 12–22 (PSPTGYMHVGN) is the 'HIGH' region element. The 'KMSKS' region signature appears at 249–253 (KLSKR). Lys-252 is a binding site for ATP.

Belongs to the class-I aminoacyl-tRNA synthetase family. Glutamate--tRNA ligase type 1 subfamily. As to quaternary structure, monomer.

The protein resides in the cytoplasm. The catalysed reaction is tRNA(Glu) + L-glutamate + ATP = L-glutamyl-tRNA(Glu) + AMP + diphosphate. Its function is as follows. Catalyzes the attachment of glutamate to tRNA(Glu) in a two-step reaction: glutamate is first activated by ATP to form Glu-AMP and then transferred to the acceptor end of tRNA(Glu). The protein is Glutamate--tRNA ligase of Clostridium novyi (strain NT).